We begin with the raw amino-acid sequence, 499 residues long: Probable cytosol aminopeptidase (499 aa).

The Mn(2+) site is built by Lys-268 and Asp-273. Lys-280 is a catalytic residue. The Mn(2+) site is built by Asp-291, Asp-350, and Glu-352. Arg-354 is a catalytic residue.

It belongs to the peptidase M17 family. It depends on Mn(2+) as a cofactor.

The protein localises to the cytoplasm. It catalyses the reaction Release of an N-terminal amino acid, Xaa-|-Yaa-, in which Xaa is preferably Leu, but may be other amino acids including Pro although not Arg or Lys, and Yaa may be Pro. Amino acid amides and methyl esters are also readily hydrolyzed, but rates on arylamides are exceedingly low.. It carries out the reaction Release of an N-terminal amino acid, preferentially leucine, but not glutamic or aspartic acids.. Functionally, presumably involved in the processing and regular turnover of intracellular proteins. Catalyzes the removal of unsubstituted N-terminal amino acids from various peptides. The protein is Probable cytosol aminopeptidase of Halorhodospira halophila (strain DSM 244 / SL1) (Ectothiorhodospira halophila (strain DSM 244 / SL1)).